A 140-amino-acid polypeptide reads, in one-letter code: Ribosomal RNA large subunit methyltransferase H (140 aa).

S-adenosyl-L-methionine-binding positions include Leu58, Gly90, and 108 to 113; that span reads LSLLTF.

This sequence belongs to the RNA methyltransferase RlmH family. As to quaternary structure, homodimer.

The protein resides in the cytoplasm. It carries out the reaction pseudouridine(1915) in 23S rRNA + S-adenosyl-L-methionine = N(3)-methylpseudouridine(1915) in 23S rRNA + S-adenosyl-L-homocysteine + H(+). Its function is as follows. Specifically methylates the pseudouridine at position 1915 (m3Psi1915) in 23S rRNA. The polypeptide is Ribosomal RNA large subunit methyltransferase H (Protochlamydia amoebophila (strain UWE25)).